The primary structure comprises 282 residues: D-alanine aminotransferase (282 aa).

Y32 serves as a coordination point for substrate. R51 contacts pyridoxal 5'-phosphate. 2 residues coordinate substrate: R99 and H101. K146 functions as the Proton acceptor in the catalytic mechanism. K146 carries the post-translational modification N6-(pyridoxal phosphate)lysine. A pyridoxal 5'-phosphate-binding site is contributed by E178.

Belongs to the class-IV pyridoxal-phosphate-dependent aminotransferase family. In terms of assembly, homodimer. Pyridoxal 5'-phosphate serves as cofactor.

The catalysed reaction is D-alanine + 2-oxoglutarate = D-glutamate + pyruvate. Functionally, acts on the D-isomers of alanine, leucine, aspartate, glutamate, aminobutyrate, norvaline and asparagine. The enzyme transfers an amino group from a substrate D-amino acid to the pyridoxal phosphate cofactor to form pyridoxamine and an alpha-keto acid in the first half-reaction. The second half-reaction is the reverse of the first, transferring the amino group from the pyridoxamine to a second alpha-keto acid to form the product D-amino acid via a ping-pong mechanism. This is an important process in the formation of D-alanine and D-glutamate, which are essential bacterial cell wall components. The sequence is that of D-alanine aminotransferase (dat) from Staphylococcus epidermidis (strain ATCC 35984 / DSM 28319 / BCRC 17069 / CCUG 31568 / BM 3577 / RP62A).